The chain runs to 674 residues: U-box domain-containing protein 16 (674 aa).

Residues 273-347 (NIPADFRCPI…VLWCRDQKIP (75 aa)) form the U-box domain. ARM repeat units lie at residues 399-438 (TVAR…NLSI), 441-481 (QNKT…SLAG), and 484-523 (AYRR…NLVA).

It catalyses the reaction S-ubiquitinyl-[E2 ubiquitin-conjugating enzyme]-L-cysteine + [acceptor protein]-L-lysine = [E2 ubiquitin-conjugating enzyme]-L-cysteine + N(6)-ubiquitinyl-[acceptor protein]-L-lysine.. It functions in the pathway protein modification; protein ubiquitination. Its function is as follows. Functions as an E3 ubiquitin ligase. The protein is U-box domain-containing protein 16 (PUB16) of Arabidopsis thaliana (Mouse-ear cress).